The chain runs to 397 residues: Mannonate dehydratase (397 aa).

This sequence belongs to the mannonate dehydratase family. Requires Fe(2+) as cofactor. The cofactor is Mn(2+).

It carries out the reaction D-mannonate = 2-dehydro-3-deoxy-D-gluconate + H2O. The protein operates within carbohydrate metabolism; pentose and glucuronate interconversion. Functionally, catalyzes the dehydration of D-mannonate. The protein is Mannonate dehydratase of Yersinia pestis bv. Antiqua (strain Antiqua).